A 344-amino-acid polypeptide reads, in one-letter code: MSNAITMGIFWHLIGAASAACFYAPFKKVKKWSWETMWSVGGIVSWIILPWAISALLLPNFWAYYSSFSLSTLLPVFLFGAMWGIGNINYGLTMRYLGMSMGIGIAIGITLIVGTLMTPIINGNFDVLINTEGGRMTLLGVLVALIGVGIVTRAGQLKERKMGIKAEEFNLKKGLVLAVMCGIFSAGMSFAMNAAKPMHEAAAALGVDPLYVALPSYVVIMGGGAIINLGFCFIRLAKVKDLSLKADFSLAKPLIIHNVLLSVLGGLMWYLQFFFYAWGHARIPAQYDYISWMLHMSFYVLCGGIVGLVLKEWNNAGRRPVTVLSLGCVVIIVAANIVGIGMAN.

The next 10 helical transmembrane spans lie at 4–24 (AITMGIFWHLIGAASAACFYA), 38–58 (WSVGGIVSWIILPWAISALLL), 68–88 (FSLSTLLPVFLFGAMWGIGNI), 101–121 (MGIGIAIGITLIVGTLMTPII), 137–157 (TLLGVLVALIGVGIVTRAGQL), 175–195 (LVLAVMCGIFSAGMSFAMNAA), 214–234 (LPSYVVIMGGGAIINLGFCFI), 259–279 (VLLSVLGGLMWYLQFFFYAWG), 290–310 (ISWMLHMSFYVLCGGIVGLVL), and 323–343 (VLSLGCVVIIVAANIVGIGMA).

The protein belongs to the L-rhamnose transporter (TC 2.A.7.6) family.

It is found in the cell inner membrane. It catalyses the reaction L-rhamnopyranose(in) + H(+)(in) = L-rhamnopyranose(out) + H(+)(out). Uptake of L-rhamnose across the cytoplasmic membrane with the concomitant transport of protons into the cell (symport system). The protein is L-rhamnose-proton symporter of Escherichia coli O1:K1 / APEC.